A 179-amino-acid polypeptide reads, in one-letter code: MINKSVIMDEAAIRRALTRIAHEIIERNKGVEDLIIVGIKTRGIYLAQRLVERIEMIENVKVPVGELDITFYRDDLQHKSEDAILQGSKLPDQITGKTVILVDDVLYTGRTVRAALDALIDNGRPRMIQLAVLVDRGHRELPIRPDFVGKNLPTARTEIVDVQLAEVDVMDIVSIRQLL.

A PRPP-binding motif is present at residues 99–111 (VILVDDVLYTGRT).

This sequence belongs to the purine/pyrimidine phosphoribosyltransferase family. PyrR subfamily. In terms of assembly, homodimer and homohexamer; in equilibrium.

The enzyme catalyses UMP + diphosphate = 5-phospho-alpha-D-ribose 1-diphosphate + uracil. Functionally, regulates transcriptional attenuation of the pyrimidine nucleotide (pyr) operon by binding in a uridine-dependent manner to specific sites on pyr mRNA. This disrupts an antiterminator hairpin in the RNA and favors formation of a downstream transcription terminator, leading to a reduced expression of downstream genes. Also displays a weak uracil phosphoribosyltransferase activity which is not physiologically significant. This Brevibacillus brevis (strain 47 / JCM 6285 / NBRC 100599) protein is Bifunctional protein PyrR.